The chain runs to 279 residues: ATP synthase subunit delta (279 aa).

This sequence belongs to the ATPase delta chain family. As to quaternary structure, F-type ATPases have 2 components, F(1) - the catalytic core - and F(0) - the membrane proton channel. F(1) has five subunits: alpha(3), beta(3), gamma(1), delta(1), epsilon(1). F(0) has three main subunits: a(1), b(2) and c(10-14). The alpha and beta chains form an alternating ring which encloses part of the gamma chain. F(1) is attached to F(0) by a central stalk formed by the gamma and epsilon chains, while a peripheral stalk is formed by the delta and b chains.

It localises to the cell membrane. F(1)F(0) ATP synthase produces ATP from ADP in the presence of a proton or sodium gradient. F-type ATPases consist of two structural domains, F(1) containing the extramembraneous catalytic core and F(0) containing the membrane proton channel, linked together by a central stalk and a peripheral stalk. During catalysis, ATP synthesis in the catalytic domain of F(1) is coupled via a rotary mechanism of the central stalk subunits to proton translocation. Functionally, this protein is part of the stalk that links CF(0) to CF(1). It either transmits conformational changes from CF(0) to CF(1) or is implicated in proton conduction. In Parafrankia sp. (strain EAN1pec), this protein is ATP synthase subunit delta.